We begin with the raw amino-acid sequence, 84 residues long: Antimicrobial peptide MeuNaTxbeta-2 (84 aa).

Positions 1-20 (MMKTVIVLIVFSLVMIVVKS) are cleaved as a signal peptide. The LCN-type CS-alpha/beta domain occupies 21–83 (DNGYLLDKYT…LWHYETNRCR (63 aa)). Cystine bridges form between Cys-32–Cys-82, Cys-36–Cys-57, Cys-43–Cys-64, and Cys-47–Cys-66.

As to expression, expressed by the venom gland.

The protein localises to the secreted. Antimicrobial peptide with activity against both Gram-positive and -negative bacteria. This chain is Antimicrobial peptide MeuNaTxbeta-2, found in Mesobuthus eupeus (Lesser Asian scorpion).